The primary structure comprises 220 residues: Peritrophin-55 (220 aa).

A signal peptide spans 1 to 19 (MKSVFVCTLVLALAHHAFA). Asn-29 is a glycosylation site (N-linked (GlcNAc...) asparagine). In terms of domain architecture, Chitin-binding type-2 spans 33 to 95 (ITPCLGNDII…NFIPAPTCEY (63 aa)). A disulfide bridge connects residues Cys-68 and Cys-84. Low complexity predominate over residues 116-165 (TTLKTTPSKTTPIVTTAPPSTPVPSTIVTNKPDPTTPKTTKPPKVTTTVN). Residues 116–220 (TTLKTTPSKT…TPPSIVQLQN (105 aa)) form a disordered region. Positions 197 to 210 (PTPPGMPPTPPSFG) are enriched in pro residues.

Post-translationally, glycosylated. In terms of tissue distribution, larval peritrophic membrane.

Its function is as follows. May bind oligosaccharide structures. This Lucilia cuprina (Green bottle fly) protein is Peritrophin-55.